We begin with the raw amino-acid sequence, 152 residues long: uncharacterized protein (152 aa).

An HTH marR-type domain is found at 3–143 (EQKLCQAINL…IIEIFTILKS (141 aa)). A DNA-binding region (H-T-H motif) is located at residues 55 to 78 (PGSLAMYQNVHKSAISNRLKKLLE).

This is an uncharacterized protein from Bacillus subtilis (strain 168).